We begin with the raw amino-acid sequence, 141 residues long: Ribosome-binding factor A (141 aa).

It belongs to the RbfA family. As to quaternary structure, monomer. Binds 30S ribosomal subunits, but not 50S ribosomal subunits or 70S ribosomes.

The protein localises to the cytoplasm. In terms of biological role, one of several proteins that assist in the late maturation steps of the functional core of the 30S ribosomal subunit. Associates with free 30S ribosomal subunits (but not with 30S subunits that are part of 70S ribosomes or polysomes). Required for efficient processing of 16S rRNA. May interact with the 5'-terminal helix region of 16S rRNA. This is Ribosome-binding factor A from Maricaulis maris (strain MCS10) (Caulobacter maris).